The primary structure comprises 320 residues: Flavonol 4'-sulfotransferase (320 aa).

Residue 69 to 74 participates in 3'-phosphoadenylyl sulfate binding; it reads KSGTTW. Histidine 129 acts as the Proton acceptor in catalysis. 3'-phosphoadenylyl sulfate is bound by residues arginine 151, serine 159, tyrosine 217, and 285-287; that span reads RKA.

This sequence belongs to the sulfotransferase 1 family. In terms of tissue distribution, highest in shoot tips and lowest in mature leaves and roots.

The protein localises to the cytoplasm. It carries out the reaction quercetin 3-sulfate + 3'-phosphoadenylyl sulfate = quercetin 3,4'-bissulfate + adenosine 3',5'-bisphosphate + H(+). No requirement for divalent cations and insensitive to p-chloromercuribenzoate, iodoacetate, or iodoacetamide. Its function is as follows. Sulfotransferase that utilizes 3'-phospho-5'-adenylyl sulfate (PAPS) as sulfonate donor to catalyze the sulfate conjugation of quercetin 3-sulfate &gt; kaempferol 3-sulfate &gt; isorhamnetin 3-sulfate &gt; patuletin 3-sulfate, but not tamarixetin 3-sulfate. O-sulfation of position 4' of flavonol. May play a role in auxin transport. In Flaveria chlorifolia (Clasping yellowtops), this protein is Flavonol 4'-sulfotransferase.